A 457-amino-acid polypeptide reads, in one-letter code: tRNA-2-methylthio-N(6)-dimethylallyladenosine synthase (457 aa).

An MTTase N-terminal domain is found at 3 to 120; the sequence is KKVYVKTFGC…LPQMIDQRRA (118 aa). Positions 12, 49, 83, 157, 161, and 164 each coordinate [4Fe-4S] cluster. Residues 143–377 enclose the Radical SAM core domain; sequence RVEGPSAFVS…QATIEENVAR (235 aa). Positions 380–447 constitute a TRAM domain; that stretch reads RSMVGKVERI…PHSLRGELLL (68 aa).

The protein belongs to the methylthiotransferase family. MiaB subfamily. In terms of assembly, monomer. It depends on [4Fe-4S] cluster as a cofactor.

It is found in the cytoplasm. It carries out the reaction N(6)-dimethylallyladenosine(37) in tRNA + (sulfur carrier)-SH + AH2 + 2 S-adenosyl-L-methionine = 2-methylsulfanyl-N(6)-dimethylallyladenosine(37) in tRNA + (sulfur carrier)-H + 5'-deoxyadenosine + L-methionine + A + S-adenosyl-L-homocysteine + 2 H(+). Its function is as follows. Catalyzes the methylthiolation of N6-(dimethylallyl)adenosine (i(6)A), leading to the formation of 2-methylthio-N6-(dimethylallyl)adenosine (ms(2)i(6)A) at position 37 in tRNAs that read codons beginning with uridine. The chain is tRNA-2-methylthio-N(6)-dimethylallyladenosine synthase from Burkholderia ambifaria (strain ATCC BAA-244 / DSM 16087 / CCUG 44356 / LMG 19182 / AMMD) (Burkholderia cepacia (strain AMMD)).